The chain runs to 211 residues: Probable nicotinate-nucleotide adenylyltransferase (211 aa).

Belongs to the NadD family.

The enzyme catalyses nicotinate beta-D-ribonucleotide + ATP + H(+) = deamido-NAD(+) + diphosphate. Its pathway is cofactor biosynthesis; NAD(+) biosynthesis; deamido-NAD(+) from nicotinate D-ribonucleotide: step 1/1. Its function is as follows. Catalyzes the reversible adenylation of nicotinate mononucleotide (NaMN) to nicotinic acid adenine dinucleotide (NaAD). The sequence is that of Probable nicotinate-nucleotide adenylyltransferase from Legionella pneumophila (strain Paris).